Here is a 588-residue protein sequence, read N- to C-terminus: Adenine deaminase (588 aa).

This sequence belongs to the metallo-dependent hydrolases superfamily. Adenine deaminase family. In terms of assembly, homodimer. Mn(2+) is required as a cofactor.

The catalysed reaction is adenine + H2O + H(+) = hypoxanthine + NH4(+). This Escherichia coli O157:H7 (strain EC4115 / EHEC) protein is Adenine deaminase.